We begin with the raw amino-acid sequence, 249 residues long: Coproheme decarboxylase (249 aa).

Residues Arg-131, 145–149, His-172, and Gln-185 each bind Fe-coproporphyrin III; that span reads YPMDK. Residue Tyr-145 is part of the active site.

It belongs to the ChdC family. Type 1 subfamily. Requires Fe-coproporphyrin III as cofactor.

It carries out the reaction Fe-coproporphyrin III + 2 H2O2 + 2 H(+) = heme b + 2 CO2 + 4 H2O. It catalyses the reaction Fe-coproporphyrin III + H2O2 + H(+) = harderoheme III + CO2 + 2 H2O. The catalysed reaction is harderoheme III + H2O2 + H(+) = heme b + CO2 + 2 H2O. It participates in porphyrin-containing compound metabolism; protoheme biosynthesis. Functionally, involved in coproporphyrin-dependent heme b biosynthesis. Catalyzes the decarboxylation of Fe-coproporphyrin III (coproheme) to heme b (protoheme IX), the last step of the pathway. The reaction occurs in a stepwise manner with a three-propionate intermediate. This Staphylococcus haemolyticus (strain JCSC1435) protein is Coproheme decarboxylase.